The following is a 219-amino-acid chain: Ribose-5-phosphate isomerase A (219 aa).

Substrate-binding positions include 28–31, 81–84, and 94–97; these read TGST, DGAD, and KGGG. Catalysis depends on glutamate 103, which acts as the Proton acceptor. Residue lysine 121 coordinates substrate.

The protein belongs to the ribose 5-phosphate isomerase family. Homodimer.

It catalyses the reaction aldehydo-D-ribose 5-phosphate = D-ribulose 5-phosphate. Its pathway is carbohydrate degradation; pentose phosphate pathway; D-ribose 5-phosphate from D-ribulose 5-phosphate (non-oxidative stage): step 1/1. Functionally, catalyzes the reversible conversion of ribose-5-phosphate to ribulose 5-phosphate. In Shigella boydii serotype 18 (strain CDC 3083-94 / BS512), this protein is Ribose-5-phosphate isomerase A.